A 65-amino-acid polypeptide reads, in one-letter code: Cold shock-like protein CspC (65 aa).

The region spanning 3-62 is the CSD domain; the sequence is GRVKWFNAEKGFGFIEREDGDDVFVHFSAIQQDGYKSLEEGQQVEFDIVDGARGPQAANV.

As to quaternary structure, homodimer.

Its subcellular location is the cytoplasm. This is Cold shock-like protein CspC (cspC) from Bacillus cereus.